The primary structure comprises 263 residues: Proteasome subunit alpha type-1 (263 aa).

At M1 the chain carries N-acetylmethionine. Phosphoserine; alternate is present on S110. Residue S110 is glycosylated (O-linked (GlcNAc) serine; alternate). A Glycyl lysine isopeptide (Lys-Gly) (interchain with G-Cter in ubiquitin) cross-link involves residue K115. A Phosphoserine modification is found at S177. K208 participates in a covalent cross-link: Glycyl lysine isopeptide (Lys-Gly) (interchain with G-Cter in ubiquitin). Residues 232 to 263 are disordered; the sequence is FLDGLEERPQRKAQPSQAAEEPAEKADEPMEH. A compositionally biased stretch (basic and acidic residues) spans 253–263; that stretch reads PAEKADEPMEH.

It belongs to the peptidase T1A family. As to quaternary structure, the 26S proteasome consists of a 20S proteasome core and two 19S regulatory subunits. The 20S proteasome core is a barrel-shaped complex made of 28 subunits that are arranged in four stacked rings. The two outer rings are each formed by seven alpha subunits, and the two inner rings are formed by seven beta subunits. The proteolytic activity is exerted by three beta-subunits PSMB5, PSMB6 and PSMB7. Interacts with NOTCH3. Interacts with ZFAND1. C-terminal extension is partially cleaved off by limited proteolysis leading to a conversion of the proteasome from its latent into its active form. As to expression, detected in liver (at protein level).

It is found in the cytoplasm. Its subcellular location is the nucleus. Component of the 20S core proteasome complex involved in the proteolytic degradation of most intracellular proteins. This complex plays numerous essential roles within the cell by associating with different regulatory particles. Associated with two 19S regulatory particles, forms the 26S proteasome and thus participates in the ATP-dependent degradation of ubiquitinated proteins. The 26S proteasome plays a key role in the maintenance of protein homeostasis by removing misfolded or damaged proteins that could impair cellular functions, and by removing proteins whose functions are no longer required. Associated with the PA200 or PA28, the 20S proteasome mediates ubiquitin-independent protein degradation. This type of proteolysis is required in several pathways including spermatogenesis (20S-PA200 complex) or generation of a subset of MHC class I-presented antigenic peptides (20S-PA28 complex). This is Proteasome subunit alpha type-1 (Psma1) from Mus musculus (Mouse).